A 482-amino-acid chain; its full sequence is Adenylosuccinate lyase (482 aa).

Substrate-binding positions include 14-15 (RY), 82-84 (RHD), and 108-109 (TS). Residue His156 is the Proton donor/acceptor of the active site. Residue Gln238 coordinates substrate. The active-site Proton donor/acceptor is Ser286. Residues Arg300, Arg326, Ser331, and Arg335 each coordinate substrate.

The protein belongs to the lyase 1 family. Adenylosuccinate lyase subfamily. Homotetramer. Residues from neighboring subunits contribute catalytic and substrate-binding residues to each active site.

It carries out the reaction N(6)-(1,2-dicarboxyethyl)-AMP = fumarate + AMP. It catalyses the reaction (2S)-2-[5-amino-1-(5-phospho-beta-D-ribosyl)imidazole-4-carboxamido]succinate = 5-amino-1-(5-phospho-beta-D-ribosyl)imidazole-4-carboxamide + fumarate. It functions in the pathway purine metabolism; AMP biosynthesis via de novo pathway; AMP from IMP: step 2/2. The protein operates within purine metabolism; IMP biosynthesis via de novo pathway; 5-amino-1-(5-phospho-D-ribosyl)imidazole-4-carboxamide from 5-amino-1-(5-phospho-D-ribosyl)imidazole-4-carboxylate: step 2/2. This chain is Adenylosuccinate lyase (ade8), found in Schizosaccharomyces pombe (strain 972 / ATCC 24843) (Fission yeast).